A 374-amino-acid chain; its full sequence is Mitochondrial import inner membrane translocase subunit tim50 (374 aa).

The transit peptide at 1–48 (MILNKVAKCYGKQIGFFGNKTTQFIKPNQTIFLIGGTKRLFTTQQQQS) directs the protein to the mitochondrion. The segment at 42 to 97 (TTQQQQSPKKEEPKSEQQKKVEDKTEEKEKEKDEEENENEKEKENEDGEGQKKKSK) is disordered. 2 stretches are compositionally biased toward basic and acidic residues: residues 49 to 72 (PKKEEPKSEQQKKVEDKTEEKEKE) and 81 to 93 (EKEKENEDGEGQK). The chain crosses the membrane as a helical span at residues 103-125 (IVTSVTSTFFAGVLVASTFGYLT). Positions 191–332 (PGGKKYTLVI…IELLPVLESF (142 aa)) constitute an FCP1 homology domain.

It belongs to the TIM50 family. As to quaternary structure, component of the mitochondrial import inner membrane translocase complex.

It is found in the mitochondrion inner membrane. In terms of biological role, component of the mitochondrial import inner membrane translocase that mediates the translocation of transit peptide-containing proteins across the mitochondrial inner membrane. The chain is Mitochondrial import inner membrane translocase subunit tim50 (timm50) from Dictyostelium discoideum (Social amoeba).